A 377-amino-acid chain; its full sequence is CaM kinase-like vesicle-associated protein (377 aa).

The Protein kinase domain occupies 24 to 287 (YDLGQLIKTE…AADAISHEWI (264 aa)). Residues 324–377 (MKRLRAPEQTDPGTPSPSKDSDKTPSMATPAPSPANTPAEGAPSLPCPSPDTTG) form a disordered region. Low complexity predominate over residues 347-362 (TPSMATPAPSPANTPA). A compositionally biased stretch (pro residues) spans 368–377 (LPCPSPDTTG).

This sequence belongs to the protein kinase superfamily. CAMK Ser/Thr protein kinase family. In terms of assembly, interacts with calmodulin, in the presence of calcium. The cofactor is Ca(2+).

The protein resides in the cytoplasmic vesicle membrane. Does not appear to have detectable kinase activity. This Xenopus laevis (African clawed frog) protein is CaM kinase-like vesicle-associated protein (camkv).